A 412-amino-acid chain; its full sequence is Argininosuccinate synthase (412 aa).

ATP contacts are provided by residues 10-18 and alanine 36; that span reads AYSGGLDTS. L-citrulline contacts are provided by tyrosine 87 and serine 92. Residue tyrosine 87 is modified to Phosphotyrosine. Residue lysine 112 is modified to N6-acetyllysine. Tyrosine 113 is subject to Phosphotyrosine. Position 115-123 (115-123) interacts with ATP; it reads SHGATGKGN. 3 residues coordinate L-aspartate: threonine 119, asparagine 123, and aspartate 124. Asparagine 123 provides a ligand contact to L-citrulline. Arginine 127 is a binding site for L-citrulline. 2 positions are modified to N6-acetyllysine; by CLOCK: lysine 165 and lysine 176. A phosphoserine mark is found at serine 177 and serine 180. Residues serine 180 and serine 189 each contribute to the L-citrulline site. Threonine 219 is modified (phosphothreonine). Glutamate 270 and tyrosine 282 together coordinate L-citrulline.

This sequence belongs to the argininosuccinate synthase family. Type 1 subfamily. As to quaternary structure, homotetramer. Interacts with NMRAL1. Interacts with CLOCK; in a circadian manner. Forms tissue-specific complexes with ASL, SLC7A1, HSP90AA1 and nitric oxide synthase NOS1, NOS2 or NOS3; the complex regulates cell-autonomous L-arginine synthesis and citrulline recycling while channeling extracellular L-arginine to nitric oxide synthesis pathway. Acetylated by CLOCK in a circadian manner which negatively regulates its enzyme activity. Deacetylated by histone deacetylases.

The protein localises to the cytoplasm. Its subcellular location is the cytosol. The enzyme catalyses L-citrulline + L-aspartate + ATP = 2-(N(omega)-L-arginino)succinate + AMP + diphosphate + H(+). It functions in the pathway amino-acid biosynthesis; L-arginine biosynthesis; L-arginine from L-ornithine and carbamoyl phosphate: step 2/3. It participates in nitrogen metabolism; urea cycle; (N(omega)-L-arginino)succinate from L-aspartate and L-citrulline: step 1/1. Its function is as follows. One of the enzymes of the urea cycle, the metabolic pathway transforming neurotoxic amonia produced by protein catabolism into inocuous urea in the liver of ureotelic animals. Catalyzes the formation of arginosuccinate from aspartate, citrulline and ATP and together with ASL it is responsible for the biosynthesis of arginine in most body tissues. Indirectly, may be involved in the control of blood pressure. The sequence is that of Argininosuccinate synthase from Rattus norvegicus (Rat).